A 122-amino-acid chain; its full sequence is Ribonuclease pancreatic (122 aa).

A compositionally biased stretch (basic and acidic residues) spans 1 to 16 (ETPAEKFQRQHMDTEH). The disordered stretch occupies residues 1–20 (ETPAEKFQRQHMDTEHSTAS). Residues Lys-6 and Arg-9 each contribute to the substrate site. Catalysis depends on His-11, which acts as the Proton acceptor. 4 disulfide bridges follow: Cys-25–Cys-83, Cys-39–Cys-94, Cys-57–Cys-109, and Cys-64–Cys-71. Residues 40-44 (KPLNT), Lys-65, and Arg-84 each bind substrate. His-117 functions as the Proton donor in the catalytic mechanism.

Belongs to the pancreatic ribonuclease family. Monomer. Interacts with and forms tight 1:1 complexes with RNH1. Dimerization of two such complexes may occur. Interaction with RNH1 inhibits this protein. Post-translationally, not glycosylated although the sequence N-V-T, a recognition site for carbohydrate attachment, is present. In terms of tissue distribution, pancreas.

It localises to the secreted. The enzyme catalyses an [RNA] containing cytidine + H2O = an [RNA]-3'-cytidine-3'-phosphate + a 5'-hydroxy-ribonucleotide-3'-[RNA].. It catalyses the reaction an [RNA] containing uridine + H2O = an [RNA]-3'-uridine-3'-phosphate + a 5'-hydroxy-ribonucleotide-3'-[RNA].. Functionally, endonuclease that catalyzes the cleavage of RNA on the 3' side of pyrimidine nucleotides. Acts on single-stranded and double-stranded RNA. This chain is Ribonuclease pancreatic (RNASE1), found in Osphranter rufus (Red kangaroo).